A 486-amino-acid chain; its full sequence is Adenylate kinase 8 (486 aa).

Adenylate kinase stretches follow at residues 58–258 and 269–471; these read PRII…NFIC and PRIL…SRLV. ATP is bound at residue 67 to 72; it reads ASGKKT. Positions 87-112 are NMP 1; that stretch reads TFCDILKDDSDLTRAAQSYYDKKQNV. AMP is bound by residues 139 to 142 and Arg-202; that span reads AIPK. Residues 176–205 form an LID 1 region; it reads GKRIDPVTGDVYHVTFMWPESEEVAQRLET. 278–283 serves as a coordination point for ATP; sequence GAGRNL. The NMP 2 stretch occupies residues 298 to 327; sequence CCGELLKAVSADESHMGELIKPYLESEQQV. AMP contacts are provided by residues 325–327 and 354–357; these read QQV and GFPR. An LID 2 region spans residues 391-424; sequence LRAVDPVTGEWYHSVYKPPPGPEVQARLRFNPQH. Arg-392 provides a ligand contact to ATP. An AMP-binding site is contributed by Arg-432.

This sequence belongs to the adenylate kinase family.

It localises to the cytoplasm. The protein localises to the cytosol. The enzyme catalyses AMP + ATP = 2 ADP. It carries out the reaction a 2'-deoxyribonucleoside 5'-diphosphate + ATP = a 2'-deoxyribonucleoside 5'-triphosphate + ADP. The catalysed reaction is a ribonucleoside 5'-diphosphate + ATP = a ribonucleoside 5'-triphosphate + ADP. In terms of biological role, nucleoside monophosphate (NMP) kinase that catalyzes the reversible transfer of the terminal phosphate group between nucleoside triphosphates and monophosphates. Has highest activity toward AMP, and weaker activity toward dAMP, CMP and dCMP. Also displays broad nucleoside diphosphate kinase activity. In Danio rerio (Zebrafish), this protein is Adenylate kinase 8 (ak8).